Here is a 105-residue protein sequence, read N- to C-terminus: Met repressor (105 aa).

It belongs to the MetJ family. As to quaternary structure, homodimer.

The protein localises to the cytoplasm. In terms of biological role, this regulatory protein, when combined with SAM (S-adenosylmethionine) represses the expression of the methionine regulon and of enzymes involved in SAM synthesis. The sequence is that of Met repressor from Haemophilus influenzae (strain 86-028NP).